The following is a 213-amino-acid chain: MLNKIFYIIMGPPGSGKGTQSQRLAHQLKLPHMSSGELFRSAIDSASPLGIKAAEYINQGLLVPDAIVWGMVQEALNQPECQSGCIIDGFPRTLDQAILLNDFFMQSYADYRVIQLDVSNEEIIRRIHSRFICPSCKHVYNQNQGLSECPTCQMKLVRRSDDTLEVIHKRLESYEKLTAPLIDYYQELGKLTRIPSEASPDDVFQSIEACIKA.

14–19 serves as a coordination point for ATP; it reads GSGKGT. The NMP stretch occupies residues 34–63; that stretch reads SSGELFRSAIDSASPLGIKAAEYINQGLLV. AMP contacts are provided by residues S35, R40, 61–63, 89–92, and Q96; these read LLV and GFPR. The segment at 129 to 162 is LID; sequence SRFICPSCKHVYNQNQGLSECPTCQMKLVRRSDD. An ATP-binding site is contributed by R130. The Zn(2+) site is built by C133 and C136. ATP is bound at residue 139–140; sequence VY. 2 residues coordinate Zn(2+): C149 and C152. 2 residues coordinate AMP: R159 and R170. A198 contacts ATP.

The protein belongs to the adenylate kinase family. In terms of assembly, monomer.

It localises to the cytoplasm. It catalyses the reaction AMP + ATP = 2 ADP. The protein operates within purine metabolism; AMP biosynthesis via salvage pathway; AMP from ADP: step 1/1. Catalyzes the reversible transfer of the terminal phosphate group between ATP and AMP. Plays an important role in cellular energy homeostasis and in adenine nucleotide metabolism. This is Adenylate kinase from Chlamydia abortus (strain DSM 27085 / S26/3) (Chlamydophila abortus).